We begin with the raw amino-acid sequence, 296 residues long: Ribosomal RNA small subunit methyltransferase A (296 aa).

Residues asparagine 30, leucine 32, glycine 57, glutamate 78, aspartate 103, and asparagine 128 each contribute to the S-adenosyl-L-methionine site.

Belongs to the class I-like SAM-binding methyltransferase superfamily. rRNA adenine N(6)-methyltransferase family. RsmA subfamily.

It localises to the cytoplasm. It catalyses the reaction adenosine(1518)/adenosine(1519) in 16S rRNA + 4 S-adenosyl-L-methionine = N(6)-dimethyladenosine(1518)/N(6)-dimethyladenosine(1519) in 16S rRNA + 4 S-adenosyl-L-homocysteine + 4 H(+). In terms of biological role, specifically dimethylates two adjacent adenosines (A1518 and A1519) in the loop of a conserved hairpin near the 3'-end of 16S rRNA in the 30S particle. May play a critical role in biogenesis of 30S subunits. The chain is Ribosomal RNA small subunit methyltransferase A from Staphylococcus carnosus (strain TM300).